The sequence spans 445 residues: Putative ATP-dependent RNA helicase L538 (445 aa).

A Helicase ATP-binding domain is found at 14-151; sequence IEFMKNNRGV…AVLVNIVRGE (138 aa). 27–34 contacts ATP; that stretch reads HSTGAGKT. The DEAH box motif lies at 101–104; that stretch reads DEAH. Residues 273–442 form the Helicase C-terminal domain; that stretch reads KIEDIMKYII…VIDASIENNY (170 aa).

The protein belongs to the DEAD box helicase family. DEAH subfamily.

Its subcellular location is the virion. It carries out the reaction ATP + H2O = ADP + phosphate + H(+). This Acanthamoeba polyphaga mimivirus (APMV) protein is Putative ATP-dependent RNA helicase L538.